A 194-amino-acid polypeptide reads, in one-letter code: Xanthine phosphoribosyltransferase (194 aa).

Xanthine-binding residues include leucine 20 and asparagine 27. A 5-phospho-alpha-D-ribose 1-diphosphate-binding site is contributed by 128 to 132; the sequence is ANGCA. Residue lysine 156 coordinates xanthine.

It belongs to the purine/pyrimidine phosphoribosyltransferase family. Xpt subfamily. Homodimer.

It localises to the cytoplasm. It carries out the reaction XMP + diphosphate = xanthine + 5-phospho-alpha-D-ribose 1-diphosphate. The protein operates within purine metabolism; XMP biosynthesis via salvage pathway; XMP from xanthine: step 1/1. Functionally, converts the preformed base xanthine, a product of nucleic acid breakdown, to xanthosine 5'-monophosphate (XMP), so it can be reused for RNA or DNA synthesis. This chain is Xanthine phosphoribosyltransferase, found in Lachnoclostridium phytofermentans (strain ATCC 700394 / DSM 18823 / ISDg) (Clostridium phytofermentans).